The sequence spans 309 residues: NAD-dependent protein deacylase sirtuin-5A, mitochondrial (309 aa).

A mitochondrion-targeting transit peptide spans 1–35; it reads MILLTFHTRRLVSHAYCGLKPASQKKSIALEMTRP. One can recognise a Deacetylase sirtuin-type domain in the interval 36-306; sequence SSNLADFREA…PPALARHETE (271 aa). 57-76 is a binding site for NAD(+); sequence GAGVSAESGVPTFRGAGGYW. 2 residues coordinate substrate: tyrosine 101 and arginine 104. 139–142 is an NAD(+) binding site; it reads QNID. Catalysis depends on histidine 157, which acts as the Proton acceptor. Positions 165, 168, 206, and 211 each coordinate Zn(2+). NAD(+)-binding positions include 248 to 250, 274 to 276, and cysteine 292; these read GTS and NME.

Belongs to the sirtuin family. Class III subfamily. The cofactor is Zn(2+).

It is found in the mitochondrion. It localises to the cytoplasm. Its subcellular location is the cytosol. The protein localises to the nucleus. The catalysed reaction is N(6)-malonyl-L-lysyl-[protein] + NAD(+) + H2O = 2''-O-malonyl-ADP-D-ribose + nicotinamide + L-lysyl-[protein]. It carries out the reaction N(6)-succinyl-L-lysyl-[protein] + NAD(+) + H2O = 2''-O-succinyl-ADP-D-ribose + nicotinamide + L-lysyl-[protein]. The enzyme catalyses N(6)-glutaryl-L-lysyl-[protein] + NAD(+) + H2O = 2''-O-glutaryl-ADP-D-ribose + nicotinamide + L-lysyl-[protein]. NAD-dependent lysine demalonylase, desuccinylase and deglutarylase that specifically removes malonyl, succinyl and glutaryl groups on target proteins. Has weak NAD-dependent protein deacetylase activity; however this activity may not be physiologically relevant in vivo. This is NAD-dependent protein deacylase sirtuin-5A, mitochondrial (sirt5-a) from Xenopus laevis (African clawed frog).